Here is a 142-residue protein sequence, read N- to C-terminus: Rhinocerosin (142 aa).

Positions 1-16 are cleaved as a signal peptide; that stretch reads MMKLYIVFGFIAFSAA. Residues 17–70 constitute a propeptide that is removed on maturation; it reads YVVPEGYYEPEYYPADGYESERVARASPAELIFDEDLADEPEVEEPQYYIRTRR. Residues 72–96 are disordered; that stretch reads LQPGAPNFPMPGSQLPTSITSNIEK. The segment covering 85–96 has biased composition (polar residues); it reads QLPTSITSNIEK.

It belongs to the coleoptericin family. As to expression, strongly expressed in the fat body and the Malpighian tubules, and weakly expressed in hemocytes and midgut.

The protein resides in the secreted. In terms of biological role, has strong antibacterial activity against E.coli, Streptococcus pyogenes, Staphylococcus aureus but not against Pseudomonas aeruginosa. This is Rhinocerosin from Oryctes rhinoceros (Coconut rhinoceros beetle).